Here is a 676-residue protein sequence, read N- to C-terminus: Envelope glycoprotein (676 aa).

Residues 1 to 32 (MGVTGILQLPRDRFKRTSFFLWVIILFQRTFS) form the signal peptide. The Extracellular portion of the chain corresponds to 33 to 650 (IPLGVIHNST…NDNWWTGWRQ (618 aa)). A glycan (N-linked (GlcNAc...) asparagine; by host) is linked at asparagine 40. 5 cysteine pairs are disulfide-bonded: cysteine 53–cysteine 609, cysteine 108–cysteine 135, cysteine 121–cysteine 147, cysteine 511–cysteine 556, and cysteine 601–cysteine 608. The segment at 54 to 201 (RDKLSSTNQL…DFFSSHPLRE (148 aa)) is receptor-binding. Asparagine 204, asparagine 228, asparagine 238, asparagine 257, asparagine 268, asparagine 296, asparagine 317, asparagine 333, asparagine 346, asparagine 386, and asparagine 413 each carry an N-linked (GlcNAc...) asparagine; by host glycan. Residues 305 to 485 (ELSFTAVSNR…SGKLGLITNT (181 aa)) are mucin-like region. Over residues 314 to 335 (RAKNISGQSPARTSSDPGTNTT) the composition is skewed to polar residues. The segment at 314 to 337 (RAKNISGQSPARTSSDPGTNTTTE) is disordered. The segment at 370–478 (TISTSPQPPT…TGEESASSGK (109 aa)) is disordered. Low complexity predominate over residues 414–427 (DSTASDTPPATTAA). 3 N-linked (GlcNAc...) asparagine; by host glycosylation sites follow: asparagine 436, asparagine 454, and asparagine 462. The span at 447–464 (ATTTSPQNHSETAGNNNT) shows a compositional bias: polar residues. The interval 524–539 (GAAIGLAWIPYFGPAA) is fusion peptide. Residues 554 to 595 (LICGLRQLANETTQALQLFLRATTELRTFSILNRKAIDFLLQ) are a coiled coil. The N-linked (GlcNAc...) asparagine; by host glycan is linked to asparagine 563. Residues 615–634 (WTKNITDKIDQIIHDFVDKT) adopt a coiled-coil conformation. N-linked (GlcNAc...) asparagine; by host glycosylation is present at asparagine 618. Residues 651-671 (WIPAGIGVTGVIIAVIALFCI) traverse the membrane as a helical segment. Residues cysteine 670 and cysteine 672 are each lipidated (S-palmitoyl cysteine; by host). Topologically, residues 672–676 (CKFVF) are cytoplasmic.

Belongs to the filoviruses glycoprotein family. Homotrimer; each monomer consists of a GP1 and a GP2 subunit linked by disulfide bonds. The resulting peplomers (GP1,2) protrude from the virus surface as spikes. Interacts with host integrin alpha-V/ITGAV. Interacts with host CLEC10A. Binds also to host CD209 and CLEC4M/DC-SIGN(R). Interacts with host FOLR1. Interacts with BST2; this interaction inhibits the antiviral effect of BST2 and this allows viral release from infected cells. Interacts with host FCN1; this interaction enhances viral entry. Interacts with host TLR4; this interaction induces cell death in T-lymphocytes or proinflammatory cytokines and SOCS1 production in monocytes. In terms of assembly, interacts with host entry receptor NPC1. As to quaternary structure, GP1 and GP2delta are part of GP1,2delta soluble complexes released by ectodomain shedding. The signal peptide region modulates GP's high mannose glycosylation, thereby determining the efficiency of the interactions with DC-SIGN(R). Post-translationally, N-glycosylated. In terms of processing, O-glycosylated in the mucin-like region. Palmitoylation of GP2 is not required for its function. Post-translationally, specific enzymatic cleavages in vivo yield mature proteins. The precursor is processed into GP1 and GP2 by host cell furin in the trans Golgi, and maybe by other host proteases, to yield the mature GP1 and GP2 proteins. The cleavage site corresponds to the furin optimal cleavage sequence [KR]-X-[KR]-R. This cleavage does not seem to be required for function. After the internalization of the virus into cell endosomes, GP1 C-terminus is removed by the endosomal proteases cathepsin B, cathepsin L, or both, leaving a 19-kDa N-terminal fragment which is further digested by cathepsin B. Proteolytic processing of GP1,2 by host ADAM17 can remove the transmembrane anchor of GP2 and leads to shedding of complexes consisting in GP1 and truncated GP2 (GP1,2delta).

Its subcellular location is the virion membrane. It is found in the host cell membrane. It localises to the secreted. In terms of biological role, trimeric GP1,2 complexes form the virion surface spikes and mediate the viral entry processes, with GP1 acting as the receptor-binding subunit and GP2 as the membrane fusion subunit. At later times of infection, down-regulates the expression of various host cell surface molecules that are essential for immune surveillance and cell adhesion. Down-modulates several integrins including ITGA1, ITGA2, ITGA3, ITGA4, ITGA5, ITGA6, ITGAV and ITGB1. This decrease in cell adhesion molecules may lead to cell detachment, contributing to the disruption of blood vessel integrity and hemorrhages developed during infection (cytotoxicity). Interacts with host TLR4 and thereby stimulates the differentiation and activation of monocytes leading to bystander death of T-lymphocytes. Down-regulates as well the function of host natural killer cells. Counteracts the antiviral effect of host BST2/tetherin that restricts release of progeny virions from infected cells. However, cooperates with VP40 and host BST2 to activate canonical NF-kappa-B pathway in a manner dependent on neddylation. Its function is as follows. Functions as a decoy for anti-GP1,2 antibodies thereby contributing to viral immune evasion. Interacts and activates host macrophages and dendritic cells inducing up-regulation of cytokine transcription. This effect is mediated throught activation of host TLR4. Responsible for binding to the receptor(s) on target cells. Interacts with CD209/DC-SIGN and CLEC4M/DC-SIGNR which act as cofactors for virus entry into dendritic cells (DCs) and endothelial cells. Binding to the macrophage specific lectin CLEC10A also seems to enhance virus infectivity. Interaction with FOLR1/folate receptor alpha may be a cofactor for virus entry in some cell types, although results are contradictory. Members of the Tyro3 receptor tyrosine kinase family also seem to be cell entry factors in filovirus infection. Once attached, the virions are internalized through clathrin-dependent endocytosis and/or macropinocytosis. After internalization of the virus into the endosomes of the host cell, proteolysis of GP1 by two cysteine proteases, CTSB/cathepsin B and CTSL/cathepsin L removes the glycan cap and allows GP1 binding to the host entry receptor NPC1. NPC1-binding, Ca(2+) and acidic pH induce a conformational change of GP2, which unmasks its fusion peptide and permit membranes fusion. Functionally, acts as a class I viral fusion protein. Under the current model, the protein has at least 3 conformational states: pre-fusion native state, pre-hairpin intermediate state, and post-fusion hairpin state. During viral and target cell membrane fusion, the coiled coil regions (heptad repeats) assume a trimer-of-hairpins structure, positioning the fusion peptide in close proximity to the C-terminal region of the ectodomain. The formation of this structure appears to drive apposition and subsequent fusion of viral and target cell membranes. Responsible for penetration of the virus into the cell cytoplasm by mediating the fusion of the membrane of the endocytosed virus particle with the endosomal membrane. Low pH in endosomes induces an irreversible conformational change in GP2, releasing the fusion hydrophobic peptide. The polypeptide is Envelope glycoprotein (GP) (Zaire ebolavirus (strain Kikwit-95) (ZEBOV)).